The chain runs to 668 residues: Kelch repeat-containing protein ARB_01230 (668 aa).

The N-terminal stretch at 1-32 (MEVGRFASKSASMTYLLLVLLVGFILPQQGQH) is a signal peptide. The Extracellular segment spans residues 33-522 (AHARTLARRD…GSGSDGPNIA (490 aa)). Asn-60 carries N-linked (GlcNAc...) asparagine glycosylation. 2 Kelch repeats span residues 62–108 (TLYI…PRGD) and 125–176 (SLFL…ANIP). N-linked (GlcNAc...) asparagine glycosylation is found at Asn-251 and Asn-291. Kelch repeat units follow at residues 283-331 (ILGL…AVAA), 340-395 (QVYL…IWNS), 396-445 (QIVV…ASQT), and 463-509 (VQSV…GPHA). The helical transmembrane segment at 523 to 543 (AIVAGVIAGCLGVLAIYLGFV) threads the bilayer. The Cytoplasmic portion of the chain corresponds to 544-668 (TWLYRRRLAI…PRQTLRVINQ (125 aa)). The tract at residues 611–642 (DNQRHNHTRSSSGGNFDHLAQPERPSTSSSVE) is disordered.

The protein localises to the membrane. The protein resides in the secreted. The chain is Kelch repeat-containing protein ARB_01230 from Arthroderma benhamiae (strain ATCC MYA-4681 / CBS 112371) (Trichophyton mentagrophytes).